We begin with the raw amino-acid sequence, 546 residues long: Choline oxidase (546 aa).

FAD is bound by residues 23–24 (SA), glutamate 44, tryptophan 71, 90–92 (AKV), 96–103 (CSSHNSCI), alanine 232, and tyrosine 465. At histidine 99 the chain carries Tele-8alpha-FAD histidine. The Proton acceptor role is filled by histidine 466. FAD is bound by residues alanine 500 and 510–512 (NPN).

Belongs to the GMC oxidoreductase family. Homodimer. The cofactor is FAD.

The enzyme catalyses choline + 2 O2 + H2O = glycine betaine + 2 H2O2 + H(+). Its pathway is amine and polyamine biosynthesis; betaine biosynthesis via choline pathway; betaine from choline: step 1/1. In terms of biological role, catalyzes the two-step oxidative conversion of choline to glycine-betaine with betaine aldehyde as an intermediate. Glycine-betaine accumulates to high levels in the cytoplasm of cells to prevent dehydration and plasmolysis in adverse hyperosmotic environments. Accepts either choline or the reaction intermediate betaine-aldehyde as substrate. The protein is Choline oxidase (codA) of Arthrobacter globiformis.